The following is a 452-amino-acid chain: GTPase Der (452 aa).

EngA-type G domains lie at Lys-9–Asp-170 and Leu-185–Asn-362. GTP contacts are provided by residues Gly-15–Ser-22, Asp-62–Phe-66, Asn-124–Glu-127, Gly-191–Ser-198, Asp-238–Leu-242, and Asn-303–Asp-306. Residues Lys-363–Lys-448 enclose the KH-like domain.

The protein belongs to the TRAFAC class TrmE-Era-EngA-EngB-Septin-like GTPase superfamily. EngA (Der) GTPase family. In terms of assembly, associates with the 50S ribosomal subunit.

Functionally, GTPase that plays an essential role in the late steps of ribosome biogenesis. The sequence is that of GTPase Der from Rickettsia bellii (strain OSU 85-389).